The primary structure comprises 337 residues: Anthranilate phosphoribosyltransferase (337 aa).

5-phospho-alpha-D-ribose 1-diphosphate contacts are provided by residues glycine 81, 84-85, serine 89, 91-94, 109-117, and alanine 121; these read GD, NVST, and KHGNRAATS. Position 81 (glycine 81) interacts with anthranilate. Serine 93 contacts Mg(2+). Asparagine 112 provides a ligand contact to anthranilate. An anthranilate-binding site is contributed by arginine 167. Residues aspartate 226 and glutamate 227 each coordinate Mg(2+).

It belongs to the anthranilate phosphoribosyltransferase family. Homodimer. The cofactor is Mg(2+).

The catalysed reaction is N-(5-phospho-beta-D-ribosyl)anthranilate + diphosphate = 5-phospho-alpha-D-ribose 1-diphosphate + anthranilate. The protein operates within amino-acid biosynthesis; L-tryptophan biosynthesis; L-tryptophan from chorismate: step 2/5. Functionally, catalyzes the transfer of the phosphoribosyl group of 5-phosphorylribose-1-pyrophosphate (PRPP) to anthranilate to yield N-(5'-phosphoribosyl)-anthranilate (PRA). The chain is Anthranilate phosphoribosyltransferase from Methylorubrum extorquens (strain PA1) (Methylobacterium extorquens).